The primary structure comprises 106 residues: MSTESALSYAALILADSEIEISSEKLLTLTNAANVPVENIWADIFAKALDGQNLKDLLVNFSAGAAAPAGVAGGVAGGEAGEAEAEKEEEEAKEESDDDMGFGLFD.

N-acetylserine is present on serine 2. Residues 73-106 are disordered; sequence GGVAGGEAGEAEAEKEEEEAKEESDDDMGFGLFD. Residues 81–100 are compositionally biased toward acidic residues; the sequence is GEAEAEKEEEEAKEESDDDM. Residue serine 96 is modified to Phosphoserine.

This sequence belongs to the eukaryotic ribosomal protein P1/P2 family. Component of the large ribosomal subunit (LSU). Mature yeast ribosomes consist of a small (40S) and a large (60S) subunit. The 40S small subunit contains 1 molecule of ribosomal RNA (18S rRNA) and 33 different proteins (encoded by 57 genes). The large 60S subunit contains 3 rRNA molecules (25S, 5.8S and 5S rRNA) and 46 different proteins (encoded by 81 genes). The 5 acidic ribosomal P-proteins form the stalk structure of the 60S subunit. They are organized as a pentameric complex in which uL10/P0 interacts with 2 heterodimers, P1A-P2B and P1B-P2A. N-terminally acetylated by acetyltransferase NatA.

Its subcellular location is the cytoplasm. Functionally, component of the ribosome, a large ribonucleoprotein complex responsible for the synthesis of proteins in the cell. The small ribosomal subunit (SSU) binds messenger RNAs (mRNAs) and translates the encoded message by selecting cognate aminoacyl-transfer RNA (tRNA) molecules. The large subunit (LSU) contains the ribosomal catalytic site termed the peptidyl transferase center (PTC), which catalyzes the formation of peptide bonds, thereby polymerizing the amino acids delivered by tRNAs into a polypeptide chain. The nascent polypeptides leave the ribosome through a tunnel in the LSU and interact with protein factors that function in enzymatic processing, targeting, and the membrane insertion of nascent chains at the exit of the ribosomal tunnel. This is Large ribosomal subunit protein P1A from Saccharomyces cerevisiae (strain ATCC 204508 / S288c) (Baker's yeast).